The sequence spans 336 residues: Flavonoid 4'-O-methyltransferase 5 (336 aa).

S-adenosyl-L-methionine-binding residues include Tyr140 and Asp203. Catalysis depends on His241, which acts as the Proton acceptor.

It belongs to the class I-like SAM-binding methyltransferase superfamily. Cation-independent O-methyltransferase family. In terms of assembly, homodimer. Expressed in leaves.

The enzyme catalyses genkwanin + S-adenosyl-L-methionine = apigenin 4',7-dimethyl ether + S-adenosyl-L-homocysteine. The catalysed reaction is cirsiliol + S-adenosyl-L-methionine = eupatorin + S-adenosyl-L-homocysteine + H(+). It carries out the reaction cirsimaritin + S-adenosyl-L-methionine = salvigenin + S-adenosyl-L-homocysteine + H(+). It catalyses the reaction scutellarein 7-methyl ether + S-adenosyl-L-methionine = ladanein + S-adenosyl-L-homocysteine + H(+). The enzyme catalyses (2S)-sakuranetin + S-adenosyl-L-methionine = (2S)-naringenin 4',7-dimethyl ether + S-adenosyl-L-homocysteine + H(+). The protein operates within flavonoid metabolism. With respect to regulation, substrate inhibition by genkwanin (GENK) at concentrations above 10 mM. In terms of biological role, flavonoid 4'-O-methyltransferase involved in the biosynthesis of polymethoxylated flavonoids natural products such as nevadensin and salvigenin, aroma compounds which contribute to the flavor of sweet basil, and exhibit pharmacological activities such as anti-allergic, anti-oxidant, antibacterial, anti-proliferative, and anti-inflammatory effects. Catalyzes S-adenosylmethionine-dependent regioselective 4'-O-methylation of flavonoids; active on various hydroxylated flavonoid substrates, including scutellarein-7-methyl ether (SCU7Me) and, with a lower efficiency, cirsimaritin (CIRM), sakuranetin (NAR7Me), ladanein (LAD) and genkwanin (GENK). In Ocimum basilicum (Sweet basil), this protein is Flavonoid 4'-O-methyltransferase 5.